The sequence spans 179 residues: Large ribosomal subunit protein uL5 (179 aa).

This sequence belongs to the universal ribosomal protein uL5 family. As to quaternary structure, part of the 50S ribosomal subunit; part of the 5S rRNA/L5/L18/L25 subcomplex. Contacts the 5S rRNA and the P site tRNA. Forms a bridge to the 30S subunit in the 70S ribosome.

Functionally, this is one of the proteins that bind and probably mediate the attachment of the 5S RNA into the large ribosomal subunit, where it forms part of the central protuberance. In the 70S ribosome it contacts protein S13 of the 30S subunit (bridge B1b), connecting the 2 subunits; this bridge is implicated in subunit movement. Contacts the P site tRNA; the 5S rRNA and some of its associated proteins might help stabilize positioning of ribosome-bound tRNAs. This is Large ribosomal subunit protein uL5 from Pseudomonas entomophila (strain L48).